Reading from the N-terminus, the 215-residue chain is Protein-L-isoaspartate O-methyltransferase (215 aa).

The active site involves Ser-62.

It belongs to the methyltransferase superfamily. L-isoaspartyl/D-aspartyl protein methyltransferase family.

Its subcellular location is the cytoplasm. It catalyses the reaction [protein]-L-isoaspartate + S-adenosyl-L-methionine = [protein]-L-isoaspartate alpha-methyl ester + S-adenosyl-L-homocysteine. Its function is as follows. Catalyzes the methyl esterification of L-isoaspartyl residues in peptides and proteins that result from spontaneous decomposition of normal L-aspartyl and L-asparaginyl residues. It plays a role in the repair and/or degradation of damaged proteins. This chain is Protein-L-isoaspartate O-methyltransferase, found in Bradyrhizobium sp. (strain BTAi1 / ATCC BAA-1182).